Consider the following 357-residue polypeptide: Cyclin-dependent kinase-like 1 (357 aa).

Residues 4–287 form the Protein kinase domain; the sequence is YEKIGKIGEG…CEQLLHHPYF (284 aa). ATP contacts are provided by residues 10 to 18 and K33; that span reads IGEGSYGVV. A [NKR]KIAxRE motif is present at residues 45-51; sequence KKIALRE. D126 functions as the Proton acceptor in the catalytic mechanism.

The protein belongs to the protein kinase superfamily. CMGC Ser/Thr protein kinase family. CDC2/CDKX subfamily. Highly expressed in kidney, and to a lower extent in ovary.

It localises to the cytoplasm. Its subcellular location is the nucleus. It catalyses the reaction L-seryl-[protein] + ATP = O-phospho-L-seryl-[protein] + ADP + H(+). The catalysed reaction is L-threonyl-[protein] + ATP = O-phospho-L-threonyl-[protein] + ADP + H(+). The protein is Cyclin-dependent kinase-like 1 of Homo sapiens (Human).